The primary structure comprises 191 residues: Ion-translocating oxidoreductase complex subunit B (191 aa).

Residues 1–26 (MSAIWIAIAVLSALSLVFGGLLGYAS) form a hydrophobic region. The region spanning 32 to 91 (EEDPIVEQIDAILPQSQCGQCGYPGCRPYADAVGNNGEMINKCAPGGEQTMLKLAALLNV) is the 4Fe-4S domain. 12 residues coordinate [4Fe-4S] cluster: cysteine 49, cysteine 52, cysteine 57, cysteine 74, cysteine 116, cysteine 119, cysteine 122, cysteine 126, cysteine 146, cysteine 149, cysteine 152, and cysteine 156. 4Fe-4S ferredoxin-type domains follow at residues 107–136 (KVAW…GATR) and 137–166 (AMHT…MRPV).

It belongs to the 4Fe4S bacterial-type ferredoxin family. RnfB subfamily. As to quaternary structure, the complex is composed of six subunits: RnfA, RnfB, RnfC, RnfD, RnfE and RnfG. The cofactor is [4Fe-4S] cluster.

It is found in the cell inner membrane. In terms of biological role, part of a membrane-bound complex that couples electron transfer with translocation of ions across the membrane. The polypeptide is Ion-translocating oxidoreductase complex subunit B (Erwinia tasmaniensis (strain DSM 17950 / CFBP 7177 / CIP 109463 / NCPPB 4357 / Et1/99)).